A 346-amino-acid polypeptide reads, in one-letter code: Methylthioribose-1-phosphate isomerase (346 aa).

Substrate is bound by residues 44–46 (RGA), Arg87, and Gln194. The active-site Proton donor is the Asp235. A substrate-binding site is contributed by 245 to 246 (NK).

It belongs to the eIF-2B alpha/beta/delta subunits family. MtnA subfamily.

It carries out the reaction 5-(methylsulfanyl)-alpha-D-ribose 1-phosphate = 5-(methylsulfanyl)-D-ribulose 1-phosphate. The protein operates within amino-acid biosynthesis; L-methionine biosynthesis via salvage pathway; L-methionine from S-methyl-5-thio-alpha-D-ribose 1-phosphate: step 1/6. Functionally, catalyzes the interconversion of methylthioribose-1-phosphate (MTR-1-P) into methylthioribulose-1-phosphate (MTRu-1-P). This chain is Methylthioribose-1-phosphate isomerase, found in Desulforamulus reducens (strain ATCC BAA-1160 / DSM 100696 / MI-1) (Desulfotomaculum reducens).